Here is an 80-residue protein sequence, read N- to C-terminus: MMKLALFSIIVILFSLIGSIHGADVPGNYPLDSSGNKYPCTVLGDNQSCIDVCKKHGVKYGYCYSFKCWCEFLEDKNVSI.

The signal sequence occupies residues M1–G22. Residues V25–I80 form the LCN-type CS-alpha/beta domain. Intrachain disulfides connect C40-C63, C49-C68, and C53-C70.

Expressed by the venom gland.

Its subcellular location is the secreted. Probable neurotoxin that inhibits ion channels. Is toxic to mice. Is about 2.8% of the total protein in the venom. This Androctonus crassicauda (Arabian fat-tailed scorpion) protein is Toxin Acra I-2.